Reading from the N-terminus, the 628-residue chain is Modular serine protease (628 aa).

The signal sequence occupies residues 1-25 (MQLISFLSNPLFFCALLLKFRTIFA). 4 LDL-receptor class A domains span residues 26–64 (ACDSSQFECDNGSCISQYDVCNGEKNCPDGSDETALTCV), 69–107 (HCTKPYFQCTYGACVIGTAGCNGVNECADGSDETRLRCG), 122–163 (NCKE…ELCG), and 166–204 (ECPAYSFKCGTGGCISGSLSCNGENDCYDGSDEAPLLCN). Cystine bridges form between C27/C39, C34/C52, C46/C63, C70/C82, C77/C95, C89/C106, C123/C135, C130/C149, C143/C162, C167/C179, C174/C192, and C186/C203. N-linked (GlcNAc...) asparagine glycosylation is present at N36. N204 is a glycosylation site (N-linked (GlcNAc...) asparagine). 2 consecutive Sushi domains span residues 222–285 (LGCP…KCVK) and 300–356 (ALCT…RCEQ). 4 cysteine pairs are disulfide-bonded: C224–C270, C256–C283, C302–C341, and C326–C354. The Peptidase S1 domain occupies 369-621 (SSGGYTINNT…FEDMILNAMN (253 aa)). N376 carries N-linked (GlcNAc...) asparagine glycosylation. The cysteines at positions 399 and 415 are disulfide-linked. Catalysis depends on charge relay system residues H414, D472, and S563. N-linked (GlcNAc...) asparagine glycosylation is present at N621.

The protein belongs to the peptidase S1 family. In terms of processing, may be proteolytically cleaved via an autocatalytic mechanism.

It is found in the secreted. In terms of biological role, serine protease that plays a key role in innate immunity by activating the Toll pathway in response to infection with Gram-positive bacteria and fungi. During Gram-positive infection, acts downstream of PGRP-SA and upstream of Grass and Spz, and therefore appears to function in a pathway that links detection of Gram-positive lysine-type peptidoglycans to Toll activation. Functions in a separate pathway to the psh-mediated activation of the Toll pathway. This is Modular serine protease from Drosophila melanogaster (Fruit fly).